Here is a 562-residue protein sequence, read N- to C-terminus: Dihydroxy-acid dehydratase 1 (562 aa).

Residue Asp80 coordinates Mg(2+). Cys121 is a [2Fe-2S] cluster binding site. The Mg(2+) site is built by Asp122 and Lys123. Lys123 is subject to N6-carboxylysine. Cys194 lines the [2Fe-2S] cluster pocket. Glu446 contributes to the Mg(2+) binding site. Catalysis depends on Ser472, which acts as the Proton acceptor.

It belongs to the IlvD/Edd family. In terms of assembly, homodimer. [2Fe-2S] cluster serves as cofactor. Requires Mg(2+) as cofactor.

It carries out the reaction (2R)-2,3-dihydroxy-3-methylbutanoate = 3-methyl-2-oxobutanoate + H2O. It catalyses the reaction (2R,3R)-2,3-dihydroxy-3-methylpentanoate = (S)-3-methyl-2-oxopentanoate + H2O. It functions in the pathway amino-acid biosynthesis; L-isoleucine biosynthesis; L-isoleucine from 2-oxobutanoate: step 3/4. The protein operates within amino-acid biosynthesis; L-valine biosynthesis; L-valine from pyruvate: step 3/4. Functionally, functions in the biosynthesis of branched-chain amino acids. Catalyzes the dehydration of (2R,3R)-2,3-dihydroxy-3-methylpentanoate (2,3-dihydroxy-3-methylvalerate) into 2-oxo-3-methylpentanoate (2-oxo-3-methylvalerate) and of (2R)-2,3-dihydroxy-3-methylbutanoate (2,3-dihydroxyisovalerate) into 2-oxo-3-methylbutanoate (2-oxoisovalerate), the penultimate precursor to L-isoleucine and L-valine, respectively. This chain is Dihydroxy-acid dehydratase 1, found in Staphylococcus saprophyticus subsp. saprophyticus (strain ATCC 15305 / DSM 20229 / NCIMB 8711 / NCTC 7292 / S-41).